Here is a 216-residue protein sequence, read N- to C-terminus: Regulator of G-protein signaling 19 (216 aa).

The span at 1–19 shows a compositional bias: basic and acidic residues; sequence MPTPHEAEKQHTGPEEADR. Residues 1 to 30 form a disordered region; the sequence is MPTPHEAEKQHTGPEEADRPPSMSSHDAAP. A Phosphoserine; by CK2 modification is found at serine 24. The RGS domain occupies 90 to 206; that stretch reads SFDKLMHSPT…LTSPTYRSLL (117 aa). The residue at position 97 (serine 97) is a Phosphoserine. A Phosphoserine; by MAPK1 and MAPK3 modification is found at serine 151. The segment at 207–216 is interaction with GIPC; sequence LQGAPQSSEA.

Interacts with GIPC PDZ domain. Interacts with GNAO1. Fatty acylated. Heavily palmitoylated in the cysteine string motif. In terms of processing, phosphorylated, mainly on serine residues.

It is found in the membrane. In terms of biological role, inhibits signal transduction by increasing the GTPase activity of G protein alpha subunits thereby driving them into their inactive GDP-bound form. Binds to G-alpha subfamily 1 members, predominantly to G(i)-alpha-3. Activity on G(z)-alpha is inhibited by phosphorylation and palmitoylation of the G-protein. The chain is Regulator of G-protein signaling 19 (Rgs19) from Rattus norvegicus (Rat).